The following is a 276-amino-acid chain: MLFRSQTHVFPGVYMMVAMLVVALSGYQVQSYSAKDILADVLMTDLLNRMDKDMQVGYYDVGNEAAAGSKDNVDLVSRSEYARLCDGGSDCILQSGSASGAASHPSLRDDEFLQHSSLWGHQFISGGMGEGPNRYPTIVKNDAGLPAYCNPPNPCPEGYDMETQGGSCIVDFENTAIFSREFQAAQDCTCDNEHMFDCSEQDSADVGGDKGDLNSAVEQYIMQMGQENSLNNVNSLAKKAGYPVMPDPRLDDAVINPFLQGDRLPIAAKKGNLLFH.

C155 and C168 are joined by a disulfide.

It belongs to the 7B2 family. As to quaternary structure, interacts with amon/PC2 early in the secretory pathway. Dissociation occurs at later stages.

It is found in the secreted. Its function is as follows. Acts as a molecular chaperone for neuroendocrine convertase amon/PC2, preventing its premature activation in the regulated secretory pathway. Binds to inactive amon in the endoplasmic reticulum and facilitates its transport from there to later compartments of the secretory pathway where it is proteolytically matured and activated. Also required for cleavage of amon. This is Neuroendocrine protein 7B2 from Drosophila melanogaster (Fruit fly).